The primary structure comprises 237 residues: Proteasome subunit beta (237 aa).

The segment at 1–27 is disordered; it reads MSKFPDLPGMKNLDANPYEPELASFDD. Positions 1–42 are cleaved as a propeptide — removed in mature form; by autocatalysis; the sequence is MSKFPDLPGMKNLDANPYEPELASFDDMDADAGDGDAVAKTG. Residue Thr-43 is the Nucleophile of the active site.

This sequence belongs to the peptidase T1B family. In terms of assembly, the 20S proteasome core is composed of 14 alpha and 14 beta subunits that assemble into four stacked heptameric rings, resulting in a barrel-shaped structure. The two inner rings, each composed of seven catalytic beta subunits, are sandwiched by two outer rings, each composed of seven alpha subunits. The catalytic chamber with the active sites is on the inside of the barrel. Has a gated structure, the ends of the cylinder being occluded by the N-termini of the alpha-subunits. Is capped at one or both ends by the proteasome regulatory ATPase, PAN.

The protein localises to the cytoplasm. It carries out the reaction Cleavage of peptide bonds with very broad specificity.. The formation of the proteasomal ATPase PAN-20S proteasome complex, via the docking of the C-termini of PAN into the intersubunit pockets in the alpha-rings, triggers opening of the gate for substrate entry. Interconversion between the open-gate and close-gate conformations leads to a dynamic regulation of the 20S proteasome proteolysis activity. Functionally, component of the proteasome core, a large protease complex with broad specificity involved in protein degradation. This is Proteasome subunit beta from Halomicrobium mukohataei (strain ATCC 700874 / DSM 12286 / JCM 9738 / NCIMB 13541) (Haloarcula mukohataei).